We begin with the raw amino-acid sequence, 612 residues long: Anaerobic magnesium-protoporphyrin IX monomethyl ester cyclase (612 aa).

The B12-binding domain occupies 9 to 143; that stretch reads NYHSGGAEIA…KAYEADNFAE (135 aa). The Radical SAM core domain occupies 190–417; sequence PLGVRVAIPN…MKPKALTRGE (228 aa). [4Fe-4S] cluster-binding residues include C204, C208, and C211.

It belongs to the BchE family. The cofactor is [4Fe-4S] cluster. Adenosylcob(III)alamin is required as a cofactor.

The catalysed reaction is Mg-protoporphyrin IX 13-monomethyl ester + 3 S-adenosyl-L-methionine + H2O = 3,8-divinyl protochlorophyllide a + 3 5'-deoxyadenosine + 3 L-methionine + 4 H(+). It participates in porphyrin-containing compound metabolism; bacteriochlorophyll biosynthesis (light-independent). In terms of biological role, involved in the tetrapyrrole biosynthetic pathways leading to chlorophyll and bacteriochlorophyll (BChl). Catalyzes the anaerobic formation of the isocyclic ring (E-ring) in Mg-protoporphyrin monomethyl ester (MPE) to yield protochlorophyllide a (PChlide a) via a six-electron oxidation and the formation of an oxo group at position C13 using oxygen from a water molecule. The polypeptide is Anaerobic magnesium-protoporphyrin IX monomethyl ester cyclase (Cereibacter sphaeroides (strain ATCC 17023 / DSM 158 / JCM 6121 / CCUG 31486 / LMG 2827 / NBRC 12203 / NCIMB 8253 / ATH 2.4.1.) (Rhodobacter sphaeroides)).